A 343-amino-acid polypeptide reads, in one-letter code: Glucokinase (343 aa).

18–23 (GDIGGT) contributes to the ATP binding site.

Belongs to the bacterial glucokinase family.

Its subcellular location is the cytoplasm. The enzyme catalyses D-glucose + ATP = D-glucose 6-phosphate + ADP + H(+). The polypeptide is Glucokinase (Brucella abortus (strain 2308)).